Consider the following 144-residue polypeptide: Deoxyuridine 5'-triphosphate nucleotidohydrolase (144 aa).

Substrate is bound by residues Arg63 to Gly65, Asn76, and Thr80 to Asp82.

The protein belongs to the dUTPase family. Requires Mg(2+) as cofactor.

The enzyme catalyses dUTP + H2O = dUMP + diphosphate + H(+). It participates in pyrimidine metabolism; dUMP biosynthesis; dUMP from dCTP (dUTP route): step 2/2. Its function is as follows. This enzyme is involved in nucleotide metabolism: it produces dUMP, the immediate precursor of thymidine nucleotides and it decreases the intracellular concentration of dUTP so that uracil cannot be incorporated into DNA. The sequence is that of Deoxyuridine 5'-triphosphate nucleotidohydrolase from Bacteroides thetaiotaomicron (strain ATCC 29148 / DSM 2079 / JCM 5827 / CCUG 10774 / NCTC 10582 / VPI-5482 / E50).